Consider the following 182-residue polypeptide: Large ribosomal subunit protein uL6 (182 aa).

Belongs to the universal ribosomal protein uL6 family. As to quaternary structure, part of the 50S ribosomal subunit.

Functionally, this protein binds to the 23S rRNA, and is important in its secondary structure. It is located near the subunit interface in the base of the L7/L12 stalk, and near the tRNA binding site of the peptidyltransferase center. This Aeropyrum pernix (strain ATCC 700893 / DSM 11879 / JCM 9820 / NBRC 100138 / K1) protein is Large ribosomal subunit protein uL6.